A 204-amino-acid chain; its full sequence is MQVILLERVAKLGQMGDVVDVKPGFARNYLLPQGKAQTASDANIAAFEAQKAQLEARNLETKKEAEALGEKLGGQQFVVIRSASDGGNLYGSVTTRDAADVATEEGFSVDRKQVIIREPIKTLGLHIAEVHLHPEVMVTIELNVARSPEEAELQASGKSIQELAAEEEAAAEFEISELFDDIGGAASDDEGDAPAAAADEEESK.

The tract at residues 180–204 is disordered; it reads DDIGGAASDDEGDAPAAAADEEESK. Residues 187 to 204 show a composition bias toward acidic residues; sequence SDDEGDAPAAAADEEESK.

It belongs to the bacterial ribosomal protein bL9 family.

Binds to the 23S rRNA. This Ruegeria sp. (strain TM1040) (Silicibacter sp.) protein is Large ribosomal subunit protein bL9.